The sequence spans 850 residues: Protein argonaute 8 (850 aa).

The segment at 1–30 is disordered; it reads MDTTLPPPQHMEREPLKSKSSLLPMTRRGN. One can recognise a PAZ domain in the interval 247–361; sequence PVVDFLIANQ…FPIELCELVS (115 aa). The Piwi domain maps to 518 to 811; it reads QSILGEVPPK…AAAQMATAMK (294 aa).

It belongs to the argonaute family. Ago subfamily.

Its function is as follows. Involved in RNA-mediated post-transcriptional gene silencing (PTGS). Main component of the RNA-induced silencing complex (RISC) that binds to a short guide RNA such as a microRNA (miRNA) or small interfering RNA (siRNA). RISC uses the mature miRNA or siRNA as a guide for slicer-directed cleavage of homologous mRNAs to repress gene expression. This is Protein argonaute 8 (AGO8) from Arabidopsis thaliana (Mouse-ear cress).